The sequence spans 359 residues: Type-1 angiotensin II receptor (359 aa).

The Extracellular portion of the chain corresponds to 1–25 (MILNSSTEDGIKRIQDDCPKAGRHN). The N-linked (GlcNAc...) (complex) asparagine glycan is linked to Asn4. The angiotensin II site is built by Gln15 and Asp17. Intrachain disulfides connect Cys18–Cys274 and Cys101–Cys180. Residues 26–55 (YIFVMIPTLYSIIFVVGIFGNSLVVIVIYF) traverse the membrane as a helical segment. The Cytoplasmic segment spans residues 56–61 (YMKLKT). Residues 62 to 89 (VASVFLLNLALADLCFLLTLPLWAVYTA) form a helical membrane-spanning segment. The Extracellular segment spans residues 90–98 (MEYRWPFGN). A helical transmembrane segment spans residues 99-125 (YLCKIASASVSFNLYASVFLLTCLSID). Residues 126–141 (RYLAIVHPMKSRLRRT) lie on the Cytoplasmic side of the membrane. A helical transmembrane segment spans residues 142–165 (MLVAKVTCIIIWLLAGLASLPAII). Over 166 to 190 (HRNVFFIENTNITVCAFHYESQNST) the chain is Extracellular. Arg167 is a binding site for angiotensin II. An N-linked (GlcNAc...) asparagine glycan is attached at Asn176. Angiotensin II contacts are provided by Phe182, His183, and Tyr184. Asn188 carries an N-linked (GlcNAc...) asparagine glycan. A helical transmembrane segment spans residues 191–216 (LPIGLGLTKNILGFLFPFLIILTSYT). Lys199 provides a ligand contact to angiotensin II. The Cytoplasmic segment spans residues 217 to 239 (LIWKALKKAYEIQKNKPRNDDIF). The helical transmembrane segment at 240–268 (KIIMAIVLFFFFSWIPHQIFTFLDVLIQL) threads the bilayer. Over 269-278 (GIIRDCRIAD) the chain is Extracellular. A helical membrane pass occupies residues 279–304 (IVDTAMPITICIAYFNNCLNPLFYGF). Topologically, residues 305 to 359 (LGKKFKRYFLQLLKYIPPKAKSHSNLSTKMSTLSYRPSDNVSSSTKKPAPCFEVE) are cytoplasmic. The span at 335 to 350 (STLSYRPSDNVSSSTK) shows a compositional bias: polar residues. The segment at 335–359 (STLSYRPSDNVSSSTKKPAPCFEVE) is disordered. A lipid anchor (S-palmitoyl cysteine) is attached at Cys355.

Belongs to the G-protein coupled receptor 1 family. Interacts with MAS1. Interacts with ARRB1. Interacts with FLNA (via filamin repeat 21); increases PKA-mediated phosphorylation of FLNA. In terms of processing, C-terminal Ser or Thr residues may be phosphorylated. In terms of tissue distribution, liver, lung, adrenal and adrenocortical adenomas.

The protein resides in the cell membrane. Its activity is regulated as follows. Strongly inhibited by anti-hypertensive drugs losartan, candesartan, valsartan, irbesartan, telmisartan, eprosartan, olmesartan and azilsartan, most of which share a common biphenyl-tetrazole scaffold. Its function is as follows. Receptor for angiotensin II, a vasoconstricting peptide, which acts as a key regulator of blood pressure and sodium retention by the kidney. The activated receptor in turn couples to G-alpha proteins G(q) (GNAQ, GNA11, GNA14 or GNA15) and thus activates phospholipase C and increases the cytosolic Ca(2+) concentrations, which in turn triggers cellular responses such as stimulation of protein kinase C. In terms of biological role, (Microbial infection) During SARS coronavirus-2/SARS-CoV-2 infection, it is able to recognize and internalize the complex formed by secreted ACE2 and SARS-CoV-2 spike protein through DNM2/dynamin 2-dependent endocytosis. The polypeptide is Type-1 angiotensin II receptor (Homo sapiens (Human)).